The chain runs to 382 residues: PqqA peptide cyclase (382 aa).

The Radical SAM core domain occupies 8–223 (VKPPLWLLAE…VHRYREKMAA (216 aa)). Cysteine 22, cysteine 26, and cysteine 29 together coordinate [4Fe-4S] cluster.

This sequence belongs to the radical SAM superfamily. PqqE family. As to quaternary structure, interacts with PqqD. The interaction is necessary for activity of PqqE. Requires [4Fe-4S] cluster as cofactor.

The catalysed reaction is [PQQ precursor protein] + S-adenosyl-L-methionine = E-Y cross-linked-[PQQ precursor protein] + 5'-deoxyadenosine + L-methionine + H(+). The protein operates within cofactor biosynthesis; pyrroloquinoline quinone biosynthesis. Catalyzes the cross-linking of a glutamate residue and a tyrosine residue in the PqqA protein as part of the biosynthesis of pyrroloquinoline quinone (PQQ). This is PqqA peptide cyclase from Erwinia tasmaniensis (strain DSM 17950 / CFBP 7177 / CIP 109463 / NCPPB 4357 / Et1/99).